The chain runs to 1365 residues: MKNHLSNVLCAMRSDFKDNHQETINKMIQFGTVKYGIVKQLKDRARSADKDIGSDQEENGGCSPLTTATTTASPSRSPEPEEEQPEEQSTSEQSIPEQSTPDHQLENDIKSEAKSEIEPVEDNNNRVAMTKPSSEEREPNASGSMPSSPVAEASAEEAATERTPEKEKEKDVEVDVEKPDEAPSSAVPSTEVTLPGGAGAPVTLEAIQNMQMAIAQFAAKTIANGSNGADNEAAMKQLAFLQQTLFNLQQQQLFQIQLIQQLQSQLALNQAKQEEDTEEDADQEQDQEQETDTYEEEERIADMELRQKAEARMAEAKARQHLINAGVPLRESSGSPAESLKRRREHDHESQPNRRPSLDNTHKADTAQDALAKLKEMENTPLPFGSDLASSIITNHDDLPEPNSLDLLQKRAQEVLDSASQGILANSMADDFAFGEKSGEGKGRNEPFFKHRCRYCGKVFGSDSALQIHIRSHTGERPFKCNVCGSRFTTKGNLKVHFQRHAQKFPHVPMNATPIPEHMDKFHPPLLDQMSPTDSSPNHSPAPPPLGSAPASFPPAFPGLQNLYRPPMEILKSLGAAAPHQYFPQELPTDLRKPSPQLDEDEPQVKNEPVEEKDQREEHEQEMAECSEPEPEPLPLEVRIKEERVEEQEQVKQEDHRIEPRRTPSPSSEHRSPHHHRHSHMGYPPVVQPIQPAALMHPQSSPGSQSHLDHLPTPGQLPPREDFFAERFPLNFTTAKMLSPEHHSPVRSPAGGALPPGVPPPPHHHPHHMARSPFFNPIKHEMAALLPRPHSNDNSWENFIEVSNTCETMKLKELMKNKKISDPNQCVVCDRVLSCKSALQMHYRTHTGERPFKCRICGRAFTTKGNLKTHMAVHKIRPPMRNFHQCPVCHKKYSNALVLQQHIRLHTGEPTDLTPEQIQAAEIRDPPPSMMPGHFMNPFAAAAFHFGALPGGPGGPPGPNHGAHNGALGSESSQGDMDDNMDCGEDYDDDVSSEHLSNSNLEQEGDRSRSGDDFKSLLFEQKLRIDATGVVNTNPVRPRSSASSHGHSVGSTSAPTSPSVHASSQVIKRSSSPARSEASQGALDLTPRAAPTSSSSSRSPLPKEKPVSPPSLPRSPSGSSHASANILTSPLPPTVGIDCLPPGLQHHLQQQHQHLMQQQAAVAAAAAAQHHHHQQMAALHQHQEQLRREAAEAQQKAAAAAAAAAAAAAAQRQTPPQARDQRQEGGPGAGPPPNPLMGARPPFGMFPNLPLFPPATTQNMCNAMNQIAQSVMPAAPFNPLALSGVRGSTTCGICYKTFPCHSALEIHYRSHTKERPFKCSICDRGFTTKGNLKQHMLTHKIRDMEQETFRNRAVKYMSEWNEDRE.

3 disordered regions span residues 47–194 (SADK…EVTL), 270–298 (QAKQ…EEEE), and 322–363 (LINA…NTHK). 2 stretches are compositionally biased toward low complexity: residues 63–76 (SPLT…SPSR) and 87–99 (EQST…PEQS). The span at 103–117 (HQLENDIKSEAKSEI) shows a compositional bias: basic and acidic residues. A compositionally biased stretch (low complexity) spans 146-157 (PSSPVAEASAEE). Residues 159 to 181 (ATERTPEKEKEKDVEVDVEKPDE) show a composition bias toward basic and acidic residues. A compositionally biased stretch (acidic residues) spans 275 to 298 (EDTEEDADQEQDQEQETDTYEEEE). The segment covering 346–363 (HDHESQPNRRPSLDNTHK) has biased composition (basic and acidic residues). 2 C2H2-type zinc fingers span residues 451–473 (HRCR…IRSH) and 479–501 (FKCN…FQRH). Disordered stretches follow at residues 508-554 (VPMN…ASFP) and 586-716 (ELPT…TPGQ). Residues 530–539 (MSPTDSSPNH) are compositionally biased toward polar residues. Over residues 540–554 (SPAPPPLGSAPASFP) the composition is skewed to pro residues. Composition is skewed to basic and acidic residues over residues 603 to 622 (PQVK…HEQE) and 638 to 662 (VRIK…EPRR). A phosphoserine mark is found at serine 739 and serine 744. A disordered region spans residues 740–772 (PEHHSPVRSPAGGALPPGVPPPPHHHPHHMARS). 3 C2H2-type zinc fingers span residues 824-846 (NQCV…YRTH), 852-874 (FKCR…MAVH), and 884-906 (HQCP…IRLH). Disordered stretches follow at residues 948 to 1012 (ALPG…RSGD), 1030 to 1129 (VVNT…ILTS), and 1146 to 1241 (HHLQ…GARP). Acidic residues predominate over residues 976-991 (DMDDNMDCGEDYDDDV). A compositionally biased stretch (low complexity) spans 1040–1054 (SSASSHGHSVGSTSA). Over residues 1055 to 1079 (PTSPSVHASSQVIKRSSSPARSEAS) the composition is skewed to polar residues. 2 positions are modified to phosphoserine: serine 1076 and serine 1079. Low complexity-rich tracts occupy residues 1085–1100 (LTPR…SRSP), 1114–1123 (RSPSGSSHAS), and 1146–1168 (HHLQ…AAAA). Over residues 1181–1191 (QHQEQLRREAA) the composition is skewed to basic and acidic residues. A compositionally biased stretch (low complexity) spans 1192-1218 (EAQQKAAAAAAAAAAAAAAQRQTPPQA). 2 C2H2-type zinc fingers span residues 1289 to 1311 (TTCG…YRSH) and 1317 to 1339 (FKCS…MLTH).

The protein belongs to the sal C2H2-type zinc-finger protein family.

It localises to the nucleus. Functionally, required for the establishment of the posterior-most head and the anterior-most tail segments of the embryo. Probably function as a transcriptional regulator. Could repress the transcription of the tsh gene. This chain is Homeotic protein spalt-major (salm), found in Drosophila melanogaster (Fruit fly).